Reading from the N-terminus, the 208-residue chain is Putative 3-methyladenine DNA glycosylase (208 aa).

It belongs to the DNA glycosylase MPG family.

The protein is Putative 3-methyladenine DNA glycosylase of Lactobacillus delbrueckii subsp. bulgaricus (strain ATCC 11842 / DSM 20081 / BCRC 10696 / JCM 1002 / NBRC 13953 / NCIMB 11778 / NCTC 12712 / WDCM 00102 / Lb 14).